A 187-amino-acid chain; its full sequence is UPF0340 protein SGO_0411 (187 aa).

The protein belongs to the UPF0340 family.

The polypeptide is UPF0340 protein SGO_0411 (Streptococcus gordonii (strain Challis / ATCC 35105 / BCRC 15272 / CH1 / DL1 / V288)).